Consider the following 316-residue polypeptide: Lipoyl synthase (316 aa).

Cysteine 60, cysteine 65, cysteine 71, cysteine 86, cysteine 90, cysteine 93, and serine 297 together coordinate [4Fe-4S] cluster. A Radical SAM core domain is found at 72 to 286; that stretch reads WEDREATFLI…KDEADEVGFT (215 aa).

This sequence belongs to the radical SAM superfamily. Lipoyl synthase family. [4Fe-4S] cluster serves as cofactor.

The protein localises to the cytoplasm. It catalyses the reaction [[Fe-S] cluster scaffold protein carrying a second [4Fe-4S](2+) cluster] + N(6)-octanoyl-L-lysyl-[protein] + 2 oxidized [2Fe-2S]-[ferredoxin] + 2 S-adenosyl-L-methionine + 4 H(+) = [[Fe-S] cluster scaffold protein] + N(6)-[(R)-dihydrolipoyl]-L-lysyl-[protein] + 4 Fe(3+) + 2 hydrogen sulfide + 2 5'-deoxyadenosine + 2 L-methionine + 2 reduced [2Fe-2S]-[ferredoxin]. Its pathway is protein modification; protein lipoylation via endogenous pathway; protein N(6)-(lipoyl)lysine from octanoyl-[acyl-carrier-protein]: step 2/2. Functionally, catalyzes the radical-mediated insertion of two sulfur atoms into the C-6 and C-8 positions of the octanoyl moiety bound to the lipoyl domains of lipoate-dependent enzymes, thereby converting the octanoylated domains into lipoylated derivatives. The polypeptide is Lipoyl synthase (Nocardioides sp. (strain ATCC BAA-499 / JS614)).